The primary structure comprises 321 residues: ATP-dependent 6-phosphofructokinase (321 aa).

ATP is bound at residue glycine 12. 22-26 (RGVVR) contacts ADP. ATP-binding positions include 73-74 (RF) and 103-106 (GDGS). A Mg(2+)-binding site is contributed by aspartate 104. 127–129 (TID) is a binding site for substrate. The active-site Proton acceptor is aspartate 129. Arginine 156 serves as a coordination point for ADP. Residues arginine 164 and 171–173 (MGR) contribute to the substrate site. ADP-binding positions include 187–189 (GCE), lysine 213, and 215–217 (KRH). Residues glutamate 224, arginine 245, and 251-254 (HTQR) each bind substrate.

This sequence belongs to the phosphofructokinase type A (PFKA) family. ATP-dependent PFK group I subfamily. Prokaryotic clade 'B1' sub-subfamily. In terms of assembly, homotetramer. Mg(2+) serves as cofactor.

The protein resides in the cytoplasm. The catalysed reaction is beta-D-fructose 6-phosphate + ATP = beta-D-fructose 1,6-bisphosphate + ADP + H(+). It participates in carbohydrate degradation; glycolysis; D-glyceraldehyde 3-phosphate and glycerone phosphate from D-glucose: step 3/4. Its activity is regulated as follows. Allosterically activated by ADP and other diphosphonucleosides, and allosterically inhibited by phosphoenolpyruvate. Its function is as follows. Catalyzes the phosphorylation of D-fructose 6-phosphate to fructose 1,6-bisphosphate by ATP, the first committing step of glycolysis. In Glaesserella parasuis serovar 5 (strain SH0165) (Haemophilus parasuis), this protein is ATP-dependent 6-phosphofructokinase.